Consider the following 1689-residue polypeptide: Cullin-7 (1689 aa).

One can recognise a CPH domain in the interval 349–422 (RASFASFNTY…HWHMLEILGF (74 aa)). Residues 793–972 (PIQIPFFDVF…HTRLFYMVRA (180 aa)) enclose the DOC domain. Basic and acidic residues predominate over residues 1321-1337 (VAHEDSGREDKSKKEEA). The disordered stretch occupies residues 1321–1371 (VAHEDSGREDKSKKEEAIGEAAAVAMAEEEDQGKKEEGEEEGEGEDEEEER). Over residues 1358–1370 (GEEEGEGEDEEEE) the composition is skewed to acidic residues. Lys1567 participates in a covalent cross-link: Glycyl lysine isopeptide (Lys-Gly) (interchain with G-Cter in NEDD8).

This sequence belongs to the cullin family. In terms of assembly, component of the 3M complex, composed of core components CUL7, CCDC8 and OBSL1. Component of the Cul7-RING(FBXW8) complex consisting of CUL7, RBX1, SKP1 and FBXW8. Within the Cul7-RING(FBXW8) complex interacts with FBXW8 and RBX1, but not with SKP1. Interacts with CUL1 (via the C-terminal domain); the interaction seems to be mediated by FBXW8; it is likely specific to FBXW8, but not other F-box proteins. Interacts (via the CPH domain) with p53/TP53; the interaction preferentially involves tetrameric and dimeric p53/TP53; this interaction recruits p53/TP53 for ubiquitination by neddylated CUL1-RBX1. The CUL7-CUL9 heterodimer seems to interact specifically with p53/TP53. Interacts with FBXW8; interaction is mutually exclusive of binding to CUL9 or p53/TP53. Interacts with CUL9; leading to inhibited CUL9 activity. Interacts with OBSL1. Interacts (as part of the 3M complex) with HDAC4 and HDAC5; it is negatively regulated by ANKRA2.

It is found in the cytoplasm. Its subcellular location is the cytoskeleton. The protein localises to the microtubule organizing center. The protein resides in the centrosome. It localises to the perinuclear region. It is found in the golgi apparatus. Its pathway is protein modification; protein ubiquitination. Its function is as follows. Core component of the 3M and Cul7-RING(FBXW8) complexes, which mediate the ubiquitination and subsequent proteasomal degradation of target proteins. Core component of the 3M complex, a complex required to regulate microtubule dynamics and genome integrity. It is unclear how the 3M complex regulates microtubules, it could act by controlling the level of a microtubule stabilizer. The Cul7-RING(FBXW8) complex alone lacks ubiquitination activity and does not promote polyubiquitination and proteasomal degradation of p53/TP53. However it mediates recruitment of p53/TP53 for ubiquitination by neddylated CUL1-RBX1. Interaction with CUL9 is required to inhibit CUL9 activity and ubiquitination of BIRC5. The Cul7-RING(FBXW8) complex also mediates ubiquitination and consequent degradation of target proteins such as GORASP1, IRS1 and MAP4K1/HPK1. Ubiquitination of GORASP1 regulates Golgi morphogenesis and dendrite patterning in brain. Mediates ubiquitination and degradation of IRS1 in a mTOR-dependent manner: the Cul7-RING(FBXW8) complex recognizes and binds IRS1 previously phosphorylated by S6 kinase (RPS6KB1 or RPS6KB2). The Cul7-RING(FBXW8) complex also mediates ubiquitination of MAP4K1/HPK1: recognizes and binds autophosphorylated MAP4K1/HPK1, leading to its degradation, thereby affecting cell proliferation and differentiation. Acts as a regulator in trophoblast cell epithelial-mesenchymal transition and placental development. While the Cul7-RING(FBXW8) and the 3M complexes are associated and involved in common processes, CUL7 and the Cul7-RING(FBXW8) complex may have additional functions. Probably plays a role in the degradation of proteins involved in endothelial proliferation and/or differentiation. The polypeptide is Cullin-7 (Cul7) (Mus musculus (Mouse)).